The following is a 152-amino-acid chain: Large ribosomal subunit protein uL30 (152 aa).

The protein belongs to the universal ribosomal protein uL30 family. In terms of assembly, part of the 50S ribosomal subunit.

The protein is Large ribosomal subunit protein uL30 of Methanobrevibacter smithii (strain ATCC 35061 / DSM 861 / OCM 144 / PS).